A 124-amino-acid polypeptide reads, in one-letter code: Fluoride-specific ion channel FluC (124 aa).

Helical transmembrane passes span isoleucine 4–leucine 24, leucine 35–cysteine 55, valine 67–serine 87, and tryptophan 96–leucine 116. 2 residues coordinate Na(+): glycine 75 and threonine 78.

This sequence belongs to the fluoride channel Fluc/FEX (TC 1.A.43) family.

It is found in the cell inner membrane. It carries out the reaction fluoride(in) = fluoride(out). Na(+) is not transported, but it plays an essential structural role and its presence is essential for fluoride channel function. In terms of biological role, fluoride-specific ion channel. Important for reducing fluoride concentration in the cell, thus reducing its toxicity. The protein is Fluoride-specific ion channel FluC of Nitratidesulfovibrio vulgaris (strain DSM 19637 / Miyazaki F) (Desulfovibrio vulgaris).